Consider the following 449-residue polypeptide: Lysine-sensitive aspartokinase 3 (449 aa).

Residues 2–245 (SEIVVSKFGG…AAKRIDEIAF (244 aa)) form an aspartokinase region. 8 to 11 (KFGG) contributes to the ATP binding site. Residues Thr-45, Glu-119, and 198–201 (RGGS) contribute to the substrate site. Residues 221–222 (TD), Tyr-227, Arg-232, and 257–258 (KV) contribute to the ATP site. Positions 246 to 449 (AEAAEMATFG…VQKLHSNLFE (204 aa)) are interface. Residues 299–449 (FRALALRRNQ…VQKLHSNLFE (151 aa)) are required for homodimerization. Residues 313–394 (LHSLNMLHSR…GLALVALIGN (82 aa)) enclose the ACT domain. L-lysine contacts are provided by residues Met-318, Ser-321, 324 to 325 (FL), 338 to 340 (SVD), and 345 to 346 (SE).

Belongs to the aspartokinase family. As to quaternary structure, homodimer. In the inactive form a homotetramer is formed.

It carries out the reaction L-aspartate + ATP = 4-phospho-L-aspartate + ADP. Its pathway is amino-acid biosynthesis; L-lysine biosynthesis via DAP pathway; (S)-tetrahydrodipicolinate from L-aspartate: step 1/4. Its activity is regulated as follows. Synthesis and activity are sensitive to the allosteric inhibitor lysine, one of the end metabolites of the aspartic acid family branched pathway. This Escherichia coli (strain K12) protein is Lysine-sensitive aspartokinase 3 (lysC).